Reading from the N-terminus, the 390-residue chain is Probable galacturonosyltransferase-like 9 (390 aa).

Residues 1-10 (MRLRFPMKSA) are Cytoplasmic-facing. The helical; Signal-anchor for type II membrane protein transmembrane segment at 11–31 (VLAFAIFLVFIPLFSVGIRMI) threads the bilayer. Topologically, residues 32-390 (PGRLTAVSAT…SELTEDSSFF (359 aa)) are lumenal. 2 N-linked (GlcNAc...) asparagine glycosylation sites follow: asparagine 205 and asparagine 223.

Belongs to the glycosyltransferase 8 family.

The protein localises to the golgi apparatus membrane. It participates in glycan metabolism; pectin biosynthesis. May be involved in pectin and/or xylans biosynthesis in cell walls. The polypeptide is Probable galacturonosyltransferase-like 9 (GATL9) (Arabidopsis thaliana (Mouse-ear cress)).